The primary structure comprises 187 residues: Small ribosomal subunit protein uS10m (187 aa).

The protein belongs to the universal ribosomal protein uS10 family. As to quaternary structure, component of the mitochondrial ribosome small subunit (28S) which comprises a 12S rRNA and about 30 distinct proteins.

Its subcellular location is the mitochondrion. The sequence is that of Small ribosomal subunit protein uS10m (mrps10) from Danio rerio (Zebrafish).